The sequence spans 531 residues: MGFKRGKNFTLVMLIFVSMAGWMFGADTGSIGGVTSMRDFRERYADRYDPITDQYSLSSARQGLLTGMVNVGSLFGCIISSPIADRFGKRLSIIGFCAVYIIGIIVQVTAVPSWVQIMVAKIWTGIGIGALSVLAPGYQSETAPPSIRGTVVVTYQLFVTGGIFIAACINMGTHKLHKTAQWRVSIGINLLWGIITMIGILFLPESPRYLIQVGKDEEAVRVLSESAELFPDSEEVQNEYHRLKSSIDEEFAGGPCSWASIFGKDIRYRTFLGMFVMSLQQLTGNNYFFYYGFSVMQGAGINSPYLSAMILDAVNFGCTFGGMYVLERFGRRNPLIIGGIWQSICFFIYSAVGSRALYHKNGTSNTRAGAVMIVMACLFIFGFAQTWAPAAYVIVGESYPVRYRSKCAAVATASNWLWNFLISFFTPFIQASIGFKYGYVFASCNLTGAIVIFLFAKETKGLTLEEINELYMSVIKPWESGNFKLNYSEQKKVEKEKSRKGGARGESVEYVERASNTDSSPQYSSHEEDYA.

Topologically, residues arginine 5–methionine 13 are cytoplasmic. Residues leucine 14–valine 34 form a helical membrane-spanning segment. Residues threonine 35–glutamine 62 are Extracellular-facing. Residues glycine 63–isoleucine 83 form a helical membrane-spanning segment. The Cytoplasmic portion of the chain corresponds to alanine 84 to leucine 91. The chain crosses the membrane as a helical span at residues serine 92–proline 112. At serine 113 to glutamine 116 the chain is on the extracellular side. A helical transmembrane segment spans residues isoleucine 117–glycine 137. At tyrosine 138 to arginine 148 the chain is on the cytoplasmic side. Residues glycine 149–isoleucine 169 traverse the membrane as a helical segment. Residues asparagine 170 to arginine 183 are Extracellular-facing. The helical transmembrane segment at valine 184–proline 204 threads the bilayer. Over glutamate 205–threonine 270 the chain is Cytoplasmic. Residues phenylalanine 271–phenylalanine 289 traverse the membrane as a helical segment. The Extracellular portion of the chain corresponds to tyrosine 290–tyrosine 305. Residues leucine 306–leucine 326 traverse the membrane as a helical segment. The Cytoplasmic segment spans residues glutamate 327–arginine 332. Residues asparagine 333–glycine 353 traverse the membrane as a helical segment. Topologically, residues serine 354–arginine 367 are extracellular. Asparagine 361 carries an N-linked (GlcNAc...) asparagine glycan. Residues alanine 368 to alanine 388 form a helical membrane-spanning segment. Topologically, residues proline 389–alanine 408 are cytoplasmic. The chain crosses the membrane as a helical span at residues alanine 409–isoleucine 429. The Extracellular portion of the chain corresponds to glutamine 430–lysine 436. The chain crosses the membrane as a helical span at residues tyrosine 437–lysine 457. Residues glutamate 458–alanine 531 lie on the Cytoplasmic side of the membrane. Residues lysine 491–alanine 531 form a disordered region. 4 positions are modified to phosphoserine: serine 507, serine 515, serine 519, and serine 520. Residues alanine 514–serine 524 are compositionally biased toward polar residues. Tyrosine 523 is modified (phosphotyrosine).

It belongs to the major facilitator superfamily. Sugar transporter (TC 2.A.1.1) family.

Its subcellular location is the membrane. High-affinity glucose transporter. The sequence is that of High-affinity glucose transporter ght2 (ght2) from Schizosaccharomyces pombe (strain 972 / ATCC 24843) (Fission yeast).